Consider the following 484-residue polypeptide: tRNA sulfurtransferase (484 aa).

The THUMP domain occupies 63 to 167 (QAFGERLACI…GDKLYMVTKR (105 aa)). ATP-binding positions include 185–186 (LI), Lys-267, Gly-289, and Gln-298. The cysteines at positions 346 and 458 are disulfide-linked. In terms of domain architecture, Rhodanese spans 406–484 (IDTNEVVIDI…GYHNVKVYRP (79 aa)). The active-site Cysteine persulfide intermediate is the Cys-458.

Belongs to the ThiI family.

It localises to the cytoplasm. The enzyme catalyses [ThiI sulfur-carrier protein]-S-sulfanyl-L-cysteine + a uridine in tRNA + 2 reduced [2Fe-2S]-[ferredoxin] + ATP + H(+) = [ThiI sulfur-carrier protein]-L-cysteine + a 4-thiouridine in tRNA + 2 oxidized [2Fe-2S]-[ferredoxin] + AMP + diphosphate. It catalyses the reaction [ThiS sulfur-carrier protein]-C-terminal Gly-Gly-AMP + S-sulfanyl-L-cysteinyl-[cysteine desulfurase] + AH2 = [ThiS sulfur-carrier protein]-C-terminal-Gly-aminoethanethioate + L-cysteinyl-[cysteine desulfurase] + A + AMP + 2 H(+). It participates in cofactor biosynthesis; thiamine diphosphate biosynthesis. Functionally, catalyzes the ATP-dependent transfer of a sulfur to tRNA to produce 4-thiouridine in position 8 of tRNAs, which functions as a near-UV photosensor. Also catalyzes the transfer of sulfur to the sulfur carrier protein ThiS, forming ThiS-thiocarboxylate. This is a step in the synthesis of thiazole, in the thiamine biosynthesis pathway. The sulfur is donated as persulfide by IscS. The polypeptide is tRNA sulfurtransferase (Shewanella oneidensis (strain ATCC 700550 / JCM 31522 / CIP 106686 / LMG 19005 / NCIMB 14063 / MR-1)).